The chain runs to 492 residues: Probable endopolygalacturonase D (492 aa).

An N-terminal signal peptide occupies residues 1 to 16 (MKRSALILSFLPLVFG). Cysteines 151 and 166 form a disulfide. PbH1 repeat units follow at residues 216-238 (GTSV…AYWD), 258-280 (MYNS…EIES), 281-319 (TEHL…DIKE), and 320-341 (SSYF…AVTS). A glycan (N-linked (GlcNAc...) asparagine) is linked at N292. D334 functions as the Proton donor in the catalytic mechanism. Residues C336 and C352 are joined by a disulfide bond. Residue H356 is part of the active site. PbH1 repeat units follow at residues 371-392 (VNGV…RIKT), 400-422 (VYNI…DVQQ), and 434-478 (TNGV…SITG). N-linked (GlcNAc...) asparagine glycans are attached at residues N407 and N441. Disulfide bonds link C461–C466 and C484–C491.

Belongs to the glycosyl hydrolase 28 family.

It is found in the secreted. The enzyme catalyses (1,4-alpha-D-galacturonosyl)n+m + H2O = (1,4-alpha-D-galacturonosyl)n + (1,4-alpha-D-galacturonosyl)m.. Its function is as follows. Involved in maceration and soft-rotting of plant tissue. Hydrolyzes the 1,4-alpha glycosidic bonds of de-esterified pectate in the smooth region of the plant cell wall. The chain is Probable endopolygalacturonase D (pgaD) from Aspergillus oryzae (strain ATCC 42149 / RIB 40) (Yellow koji mold).